The sequence spans 674 residues: Sodium/myo-inositol cotransporter 2 (674 aa).

At 1–27 (MESSPSSPQPTQSDPLAVFPQRTLEPA) the chain is on the extracellular side. A helical transmembrane segment spans residues 28 to 48 (DIAVLVLYFLFVLAVGLWSTV). Over 49–56 (KTRRDTVK) the chain is Cytoplasmic. The helical transmembrane segment at 57 to 77 (GYFLAGGDMVWWPVGASLFAS) threads the bilayer. Over 78–102 (NVGSGHFVGLAGSGAAAGLSVTAYE) the chain is Extracellular. Residues 103–123 (FNGIFSVLMLAWIFLPIYIAG) traverse the membrane as a helical segment. The Cytoplasmic segment spans residues 124 to 140 (QVTTMPEYLRKRFGGSR). The helical transmembrane segment at 141 to 161 (IPITLAVLYLFIYIFTKISVD) threads the bilayer. The Extracellular segment spans residues 162 to 180 (MYAGAIFIQQSLHLNLYLA). A helical transmembrane segment spans residues 181 to 201 (IVGLLAITALYTIAGGLAAVI). The Cytoplasmic portion of the chain corresponds to 202-208 (YTDALQT). The helical transmembrane segment at 209-229 (LIMLIGALTLMGYSFAAVGGM) threads the bilayer. At 230–272 (EGLKEKYFLALASNRSGNSSCGLPREDAFHIFRDPLTSDLPWP) the chain is on the extracellular side. A helical transmembrane segment spans residues 273–293 (GILFGMSIPSLWYWCTDQVIV). Residues 294–308 (QRTLAAKNLSHAKGG) lie on the Cytoplasmic side of the membrane. The helical transmembrane segment at 309–329 (SLMAAYLKVLPLFIMVFPGMV) threads the bilayer. Over 330–374 (SRVLFPDQVACADPEICQKVCSNPAGCSDIAYPKLVLELLPMGLR) the chain is Extracellular. A helical transmembrane segment spans residues 375 to 397 (GLMMAVMVAALMSSLTSIFNSAS). Residues 398–418 (TIFTMDLWNHLRPRASERELM) lie on the Cytoplasmic side of the membrane. Residues 419-439 (IVGRVFVLLLVLVSILWIPVV) traverse the membrane as a helical segment. At 440 to 446 (QASQGGQ) the chain is on the extracellular side. A helical transmembrane segment spans residues 447-467 (LFIYIQSISSYLQPPVAVVFI). Residues 468 to 479 (MGCFWKRTNEKG) lie on the Cytoplasmic side of the membrane. A helical membrane pass occupies residues 480–500 (AFSGLILGLLLGLVRLVLDFI). Over 501 to 518 (YPQPRCDQPDERPAVVRD) the chain is Extracellular. The helical transmembrane segment at 519–539 (VHYLYFSMILSSVTLVTVSTV) threads the bilayer. Topologically, residues 540–653 (SWCTAPPTQE…SLEEIPLVKT (114 aa)) are cytoplasmic. Residues 654-674 (LLDINLIVCISCAIFLWGYFA) traverse the membrane as a helical segment.

The protein belongs to the sodium:solute symporter (SSF) (TC 2.A.21) family.

It is found in the membrane. Its subcellular location is the apical cell membrane. It catalyses the reaction myo-inositol(out) + 2 Na(+)(out) = myo-inositol(in) + 2 Na(+)(in). The catalysed reaction is 1D-chiro-inositol(out) + 2 Na(+)(out) = 1D-chiro-inositol(in) + 2 Na(+)(in). The enzyme catalyses D-glucose(out) + 2 Na(+)(out) = D-glucose(in) + 2 Na(+)(in). It carries out the reaction D-xylose(out) + 2 Na(+)(out) = D-xylose(in) + 2 Na(+)(in). Its activity is regulated as follows. MI transport activity inhibited by D-chiro-inositol (DCI), phlorizin (Pz) and sodium (Na(+)). Insulin increases D-chiro-inositol uptake. Functionally, involved in the sodium-dependent cotransport of myo-inositol (MI) with a Na(+):MI stoichiometry of 2:1. Exclusively responsible for apical MI transport and absorption in intestine. Can also transport D-chiro-inositol (DCI) but not L-fucose. Exhibits stereospecific cotransport of both D-glucose and D-xylose. May induce apoptosis through the TNF-alpha, PDCD1 pathway. May play a role in the regulation of MI concentration in serum, involving reabsorption in at least the proximal tubule of the kidney. The sequence is that of Sodium/myo-inositol cotransporter 2 from Sus scrofa (Pig).